Here is a 240-residue protein sequence, read N- to C-terminus: Phosphoribosylaminoimidazole-succinocarboxamide synthase (240 aa).

Belongs to the SAICAR synthetase family.

It carries out the reaction 5-amino-1-(5-phospho-D-ribosyl)imidazole-4-carboxylate + L-aspartate + ATP = (2S)-2-[5-amino-1-(5-phospho-beta-D-ribosyl)imidazole-4-carboxamido]succinate + ADP + phosphate + 2 H(+). It participates in purine metabolism; IMP biosynthesis via de novo pathway; 5-amino-1-(5-phospho-D-ribosyl)imidazole-4-carboxamide from 5-amino-1-(5-phospho-D-ribosyl)imidazole-4-carboxylate: step 1/2. The chain is Phosphoribosylaminoimidazole-succinocarboxamide synthase from Wolbachia sp. subsp. Drosophila simulans (strain wRi).